Consider the following 386-residue polypeptide: Na(+)/H(+) antiporter NhaA (386 aa).

Helical transmembrane passes span 11–31 (NDATGGVVLIVAAAFAMFLAN), 60–80 (LLLWINDALMALFFLMIGLEV), 96–116 (MFPLIAALGGMLAPGLIYAAF), 126–146 (GWAIPTATDIAFALGILALLG), 155–175 (MFLMALAVIDDLGAIVIIALF), 180–200 (LSLISLTVAAASIAVLAVLNG), 218–238 (VAVLKSGVHATLAGVIVGLFI), 260–280 (VSWLILPLFAFANAGISLSGV), 293–313 (ITLGLFIGKPLGITLICWLAV), 326–346 (LIDIAAVGVLCGIGFTMSIFI), and 358–378 (LVTLAKLGILSGSVISALVGY).

Belongs to the NhaA Na(+)/H(+) (TC 2.A.33) antiporter family.

The protein resides in the cell inner membrane. The enzyme catalyses Na(+)(in) + 2 H(+)(out) = Na(+)(out) + 2 H(+)(in). Na(+)/H(+) antiporter that extrudes sodium in exchange for external protons. The polypeptide is Na(+)/H(+) antiporter NhaA (Erwinia tasmaniensis (strain DSM 17950 / CFBP 7177 / CIP 109463 / NCPPB 4357 / Et1/99)).